An 835-amino-acid chain; its full sequence is MGNYKSRPTQTCSDEWKKKVSESYAIIIERLEDNLQIKENEFQELRHIFGSDEAFSEVSLNYRTERGLSLLHLCCVCGGNKSHIRALMLKGLRPSRLTRNGFPALHLAVYKDSPELITSLLHSGADVQQVGYGGLTALHIAAIAGHPEAAEVLLQHGANVNVQDAVFFTPLHIAAYYGHEQVTSVLLKFGADVNVSGEVGDRPLHLASAKGFFNIVKLLVEEGSKADVNAQDNEDHVPLHFCSRFGHHNIVSYLLQSDLEVQPHVINIYGDTPLHLACYNGNFEVAKEIVQVTGTESLTKENIFSETAFHSACTYGKNIDLVKFLLDQNAVNINHRGRDGHTGLHSACYHGHIRLVQFLLDNGADMNLVACDPSRSSGEKDEQTCLMWAYEKGHDAIVTLLKHYKRPQEELPCNEYSQPGGDGSYVSVPSPLGKIKSMTKEKADVLLLRAELPSRFHLQLSEIEFHEIIGSGSFGKVYKGRCRNKIVAIKRYRANTYCSKSDVDMFCREVSILCQLNHPCVVQFVGACLDDPSQFAIVTQYISGGSLFSLLHEQKRILDLQSKLIIAVDVAKGMEYLHSLTQPIIHRDLNSHNILLYEDGHAVVADFGESRFLQSLDEDNMTKQPGNLRWMAPEVFTQCTRYTIKADVFSYSLCLWELLTGEIPFAHLKPAAAAADMAYHHIRPPIGYSIPKPISSLLIRGWNACPEGRPEFSEVVSKLEECLCNVELMSPASSNSSGSLSPSSSSDCLLSRGGPGRSHVAALRSRFELEYALNARSYAGWSQSVGTHSNPGLSLEEMNRSTQYSTVDKYGYVSDPMSLTHLHSRQDDSNFEDSN.

Gly2 carries N-myristoyl glycine lipidation. Residues 21–50 are a coiled coil; that stretch reads SESYAIIIERLEDNLQIKENEFQELRHIFG. ANK repeat units lie at residues 66 to 96, 100 to 129, 133 to 162, 166 to 195, 199 to 228, 234 to 263, 269 to 298, 304 to 335, 339 to 368, and 381 to 410; these read RGLS…RPSR, NGFP…DVQQ, GGLT…NVNV, VFFT…DVNV, VGDR…KADV, EDHV…EVQP, YGDT…TESL, FSET…NINH, DGHT…DMNL, and DEQT…PQEE. Residues 463-723 enclose the Protein kinase domain; sequence IEFHEIIGSG…EVVSKLEECL (261 aa). ATP contacts are provided by residues 469-477 and Lys490; that span reads IGSGSFGKV. Asp588 (proton acceptor) is an active-site residue.

Belongs to the protein kinase superfamily. TKL Ser/Thr protein kinase family. MAP kinase kinase kinase subfamily. In terms of assembly, interacts with TNNI3, ACTC, ACTA1, MYBPC3, AIP, FABP3 and HADHB. Mg(2+) serves as cofactor. In terms of processing, autophosphorylated.

The protein localises to the nucleus. The protein resides in the cytoplasm. It catalyses the reaction L-seryl-[protein] + ATP = O-phospho-L-seryl-[protein] + ADP + H(+). The enzyme catalyses L-threonyl-[protein] + ATP = O-phospho-L-threonyl-[protein] + ADP + H(+). May play a role in cardiac physiology. The polypeptide is Serine/threonine-protein kinase TNNI3K (Rattus norvegicus (Rat)).